A 1249-amino-acid polypeptide reads, in one-letter code: Pleckstrin homology-like domain family B member 2 (1249 aa).

Disordered regions lie at residues Gln64 to Leu85 and Asp128 to Asn154. Phosphoserine occurs at positions 71 and 73. The segment covering Pro74–Ser84 has biased composition (polar residues). A compositionally biased stretch (basic and acidic residues) spans Asp128 to Glu143. Phosphoserine is present on residues Ser156, Ser203, Ser241, and Ser244. Disordered regions lie at residues Ser190 to Met248 and Asn264 to Asp289. The segment covering Glu231 to Met248 has biased composition (polar residues). Residues Ser267–Gly283 show a composition bias toward low complexity. Residues Ser329, Ser333, Ser347, Ser380, Ser383, Ser389, Ser411, Ser416, Ser465, Ser486, and Ser510 each carry the phosphoserine modification. Residues Asp388–Tyr424 are disordered. Phosphothreonine is present on residues Thr546 and Thr570. Coiled-coil stretches lie at residues Thr580–Cys692 and Phe718–Leu803. Residues Val866–Val934 are disordered. Residues Glu873–Gly888 are compositionally biased toward basic and acidic residues. Thr894 carries the post-translational modification Phosphothreonine. Polar residues predominate over residues Thr901–Pro919. Residues Ile1028–Ile1094 are a coiled coil. Residues Glu1139–Glu1242 form the PH domain.

In terms of assembly, interacts with FLNC. Interacts with AMOTL2; interaction may facilitate PHLDB2 localization to the myotube podosome cortex that surrounds the core. Part of a cortical microtubule stabilization complex (CMSC) composed of KANK1, PPFIA1, PPFIBP1, ERC1/ELKS, PHLDB2/LL5beta, CLASPs, KIF21A and possibly additional interactors; within CMSCs KANK1 and PHLDB2/LL5beta appear to be the core components for targeting of microtubule-binding proteins KIF21A and CLASPs, whereas PPFIA1, PPFIBP1 and ERC1/ELKS serve as scaffolds for protein clustering. Expressed at postsynaptic membranes of skeletal neuromuscular junctions (at protein level).

It localises to the cytoplasm. The protein resides in the membrane. It is found in the cell projection. Its subcellular location is the podosome. The protein localises to the cell cortex. Functionally, seems to be involved in the assembly of the postsynaptic apparatus. May play a role in acetyl-choline receptor (AChR) aggregation in the postsynaptic membrane. This is Pleckstrin homology-like domain family B member 2 (Phldb2) from Mus musculus (Mouse).